Reading from the N-terminus, the 396-residue chain is Elongation factor Tu (396 aa).

One can recognise a tr-type G domain in the interval Lys10 to Glu206. The G1 stretch occupies residues Gly19–Thr26. Position 19-26 (Gly19–Thr26) interacts with GTP. Residue Thr26 participates in Mg(2+) binding. The tract at residues Gly60–Asn64 is G2. Residues Asp81 to Gly84 form a G3 region. GTP contacts are provided by residues Asp81–His85 and Asn136–Asp139. A G4 region spans residues Asn136–Asp139. A G5 region spans residues Ser174–Lys176.

Belongs to the TRAFAC class translation factor GTPase superfamily. Classic translation factor GTPase family. EF-Tu/EF-1A subfamily. In terms of assembly, monomer.

It localises to the cytoplasm. The enzyme catalyses GTP + H2O = GDP + phosphate + H(+). GTP hydrolase that promotes the GTP-dependent binding of aminoacyl-tRNA to the A-site of ribosomes during protein biosynthesis. The polypeptide is Elongation factor Tu (Cupriavidus pinatubonensis (strain JMP 134 / LMG 1197) (Cupriavidus necator (strain JMP 134))).